Consider the following 101-residue polypeptide: Small ribosomal subunit protein uS14 (101 aa).

The protein belongs to the universal ribosomal protein uS14 family. Part of the 30S ribosomal subunit. Contacts proteins S3 and S10.

Its function is as follows. Binds 16S rRNA, required for the assembly of 30S particles and may also be responsible for determining the conformation of the 16S rRNA at the A site. In Caulobacter sp. (strain K31), this protein is Small ribosomal subunit protein uS14.